The sequence spans 314 residues: NF-kappa-B inhibitor alpha (314 aa).

A disordered region spans residues 1 to 39 (MFQPAGHGQDWAMEGPRDGLKKERLVDDRHDSGLDSMKD). Basic and acidic residues predominate over residues 15–39 (GPRDGLKKERLVDDRHDSGLDSMKD). A Glycyl lysine isopeptide (Lys-Gly) (interchain with G-Cter in SUMO); alternate cross-link involves residue K21. K21 participates in a covalent cross-link: Glycyl lysine isopeptide (Lys-Gly) (interchain with G-Cter in ubiquitin); alternate. Residue K22 forms a Glycyl lysine isopeptide (Lys-Gly) (interchain with G-Cter in ubiquitin) linkage. The Destruction motif motif lies at 30-36 (HDSGLDS). S32 is subject to Phosphoserine; by IKKA and IKKB. S36 bears the Phosphoserine; by IKKA, IKKB, IKKE and TBK1 mark. Y42 carries the post-translational modification Phosphotyrosine; by Tyr-kinases. The short motif at 45–54 (MVKELREIRL) is the Nuclear export signal element. A Nuclear import signal motif is present at residues 110-120 (LQQTPLHLAVI). ANK repeat units lie at residues 110–139 (LQQT…DPEL), 143–172 (RGNT…PQHL), 182–211 (NGHT…DVNA), and 216–245 (NGRT…DVNR). (3S)-3-hydroxyasparagine; by HIF1AN occurs at positions 210 and 244. A phosphoserine; by CK2 mark is found at S283 and S288. T291 is modified (phosphothreonine; by CK2). Phosphoserine; by CK2 is present on S293. T296 is modified (phosphothreonine).

The protein belongs to the NF-kappa-B inhibitor family. In terms of assembly, interacts with RELA; the interaction requires the nuclear import signal. Part of a 70-90 kDa complex at least consisting of CHUK, IKBKB, NFKBIA, RELA, ELP1 and MAP3K14. Interacts with NKIRAS1 and NKIRAS2. Interacts with RWDD3; the interaction enhances sumoylation. Interacts with PRMT2. Interacts with PRKACA in platelets; this interaction is disrupted by thrombin and collagen. Interacts with MEFV. Interacts with DDRGK1; positively regulates NFKBIA phosphorylation and degradation. Interacts with HNRNPA2B1; the interaction may be mediated by the RRM2 domain of HNRNPA2B1, and HNRNPA2B1 may interact simultaneously with FAM76B and either NFKBIA or NFKBIE to form a complex. Post-translationally, phosphorylated at Ser-32 and Ser-36 by IKKA/CHUK and IKKB/IKBKB; disables inhibition of NF-kappa-B DNA-binding activity. Phosphorylation at positions 32 and 36 is prerequisite to recognition by the SCF(FBXW11) and SCF(BTRC) complexes, leading to polyubiquitination and subsequent degradation. In terms of processing, polyubiquitinated at Lys-21 and/or Lys-22 following phosphorylation at Ser-32 and Ser-36. Monoubiquitinated at Lys-21 and/or Lys-22 by UBE2D3. Ubiquitin chain elongation is then performed by CDC34 in cooperation with the SCF(FBXW11) E3 ligase complex, building ubiquitin chains from the UBE2D3-primed NFKBIA-linked ubiquitin. The resulting polyubiquitination leads to protein degradation. Also ubiquitinated by the SCF(BTRC) complex following stimulus-dependent phosphorylation at Ser-32 and Ser-36. Deubiquitinated by USP38, leading to NF-kappa-B inhibition. Sumoylated; sumoylation requires the presence of the nuclear import signal. Sumoylation blocks ubiquitination and proteasome-mediated degradation of the protein thereby increasing the protein stability. Post-translationally, hydroxylated by HIF1AN.

It is found in the cytoplasm. It localises to the nucleus. Its function is as follows. Inhibits the activity of dimeric NF-kappa-B/REL complexes by trapping REL (RELA/p65 and NFKB1/p50) dimers in the cytoplasm by masking their nuclear localization signals. On cellular stimulation by immune and pro-inflammatory responses, becomes phosphorylated promoting ubiquitination and degradation, enabling the dimeric RELA to translocate to the nucleus and activate transcription. The sequence is that of NF-kappa-B inhibitor alpha (Nfkbia) from Rattus norvegicus (Rat).